Consider the following 228-residue polypeptide: Ribosomal RNA small subunit methyltransferase G (228 aa).

S-adenosyl-L-methionine contacts are provided by residues glycine 89, leucine 94, 140 to 141 (VE), and arginine 159.

This sequence belongs to the methyltransferase superfamily. RNA methyltransferase RsmG family.

The protein resides in the cytoplasm. The catalysed reaction is guanosine(527) in 16S rRNA + S-adenosyl-L-methionine = N(7)-methylguanosine(527) in 16S rRNA + S-adenosyl-L-homocysteine. In terms of biological role, specifically methylates the N7 position of guanine in position 527 of 16S rRNA. This Burkholderia cenocepacia (strain ATCC BAA-245 / DSM 16553 / LMG 16656 / NCTC 13227 / J2315 / CF5610) (Burkholderia cepacia (strain J2315)) protein is Ribosomal RNA small subunit methyltransferase G.